We begin with the raw amino-acid sequence, 86 residues long: Small ribosomal subunit protein uS17 (86 aa).

It belongs to the universal ribosomal protein uS17 family. As to quaternary structure, part of the 30S ribosomal subunit.

In terms of biological role, one of the primary rRNA binding proteins, it binds specifically to the 5'-end of 16S ribosomal RNA. This is Small ribosomal subunit protein uS17 from Streptococcus pyogenes serotype M3 (strain ATCC BAA-595 / MGAS315).